Reading from the N-terminus, the 333-residue chain is (2R)-3-sulfolactate dehydrogenase (NADP(+)) (333 aa).

Belongs to the LDH2/MDH2 oxidoreductase family.

It carries out the reaction (2R)-3-sulfolactate + NADP(+) = 3-sulfopyruvate + NADPH + H(+). Catalyzes the reduction of sulfopyruvate to (R)-sulfolactate. Together with SlcC, provides a racemase system that converts (2S)-3-sulfolactate to (2R)-3-sulfolactate, which is degraded further by (2R)-sulfolactate sulfo-lyase. In Chromohalobacter salexigens (strain ATCC BAA-138 / DSM 3043 / CIP 106854 / NCIMB 13768 / 1H11), this protein is (2R)-3-sulfolactate dehydrogenase (NADP(+)) (comC).